The sequence spans 475 residues: Adenylyl cyclase-associated protein 1 (475 aa).

The residue at position 2 (Ala-2) is an N-acetylalanine. At Tyr-31 the chain carries Phosphotyrosine. Ser-34 carries the phosphoserine modification. Lys-81 is modified (N6-acetyllysine). 2 disordered regions span residues 216–255 (ELSG…ASRS) and 278–318 (MKTH…TKKE). Over residues 218–228 (SGLPSGPSAGS) the composition is skewed to low complexity. A compositionally biased stretch (pro residues) spans 229-242 (GPPPPPPGPPPPPV). The span at 243-255 (STSSGSDESASRS) shows a compositional bias: low complexity. Lys-287 carries the N6-methyllysine modification. Phosphoserine is present on residues Ser-290, Ser-295, and Ser-301. Positions 300–312 (FSAPKPQTSPSPK) are enriched in pro residues. Thr-307 is subject to Phosphothreonine. 2 positions are modified to phosphoserine: Ser-308 and Ser-310. The C-CAP/cofactor C-like domain occupies 313-453 (PATKKEPAVL…EGGDFNEFPV (141 aa)). A Glycyl lysine isopeptide (Lys-Gly) (interchain with G-Cter in SUMO1) cross-link involves residue Lys-348.

This sequence belongs to the CAP family. Homodimer. Binds actin monomers.

The protein resides in the cell membrane. In terms of biological role, directly regulates filament dynamics and has been implicated in a number of complex developmental and morphological processes, including mRNA localization and the establishment of cell polarity. The protein is Adenylyl cyclase-associated protein 1 (CAP1) of Macaca fascicularis (Crab-eating macaque).